The primary structure comprises 435 residues: E3 ubiquitin-protein ligase RNFT1 (435 aa).

The segment at 1–62 (MPLFLLSLPT…SSEDASTPQC (62 aa)) is disordered. The segment covering 16 to 34 (GHERRQRPEAKTSGSEKKY) has biased composition (basic and acidic residues). Residues 40–62 (ANRSQLHSPPGTGSSEDASTPQC) are compositionally biased toward polar residues. 6 helical membrane passes run 158-178 (ILIL…LGIG), 203-223 (IQCA…YYTF), 233-253 (IFLN…IVGI), 256-276 (FILK…PSFI), 298-318 (TFVP…FGNV), and 323-343 (LGIL…FGHL). The segment at 368–419 (CSDVDDICSICQAEFQKPILLICQHIFCEECMTLWFNREKTCPLCRTVISDH) is required for ubiquitin ligase activity and for protection against ER stress-induced cell death. Residues 375 to 413 (CSICQAEFQKPILLICQHIFCEECMTLWFNREKTCPLCR) form an RING-type zinc finger.

As to expression, expressed at highest levels in testis, lower levels in heart, liver, lung, and kidney. Not detected in brain, ovary, and uterus. Down-regulated in testis from patients with maturation arrest (MA) or Sertoli cell-only syndrome (SCOS). Ubiquitously expressed with high expression in testis.

It is found in the endoplasmic reticulum membrane. The catalysed reaction is S-ubiquitinyl-[E2 ubiquitin-conjugating enzyme]-L-cysteine + [acceptor protein]-L-lysine = [E2 ubiquitin-conjugating enzyme]-L-cysteine + N(6)-ubiquitinyl-[acceptor protein]-L-lysine.. It functions in the pathway protein modification; protein ubiquitination. Functionally, E3 ubiquitin-protein ligase that acts in the endoplasmic reticulum (ER)-associated degradation (ERAD) pathway, which targets misfolded proteins that accumulate in the endoplasmic reticulum (ER) for ubiquitination and subsequent proteasome-mediated degradation. Protects cells from ER stress-induced apoptosis. In Homo sapiens (Human), this protein is E3 ubiquitin-protein ligase RNFT1 (RNFT1).